Consider the following 181-residue polypeptide: Endoribonuclease YbeY (181 aa).

3 residues coordinate Zn(2+): H140, H144, and H150.

The protein belongs to the endoribonuclease YbeY family. Zn(2+) is required as a cofactor.

It is found in the cytoplasm. Its function is as follows. Single strand-specific metallo-endoribonuclease involved in late-stage 70S ribosome quality control and in maturation of the 3' terminus of the 16S rRNA. The protein is Endoribonuclease YbeY of Dinoroseobacter shibae (strain DSM 16493 / NCIMB 14021 / DFL 12).